The chain runs to 423 residues: Lysosomal acid phosphatase (423 aa).

The N-terminal stretch at 1–30 is a signal peptide; the sequence is MAGKRSGWSRAALLQLLLGVNLVVMPPTQA. Over 31–380 the chain is Lumenal; that stretch reads RSLRFVTLLY…QVASGPADTE (350 aa). Histidine 42 (nucleophile) is an active-site residue. N-linked (GlcNAc...) asparagine glycosylation is found at asparagine 92, asparagine 133, asparagine 167, asparagine 177, asparagine 191, and asparagine 267. Intrachain disulfides connect cysteine 159–cysteine 370, cysteine 212–cysteine 310, and cysteine 345–cysteine 349. Aspartate 287 serves as the catalytic Proton donor. 2 N-linked (GlcNAc...) asparagine glycosylation sites follow: asparagine 322 and asparagine 331. A helical membrane pass occupies residues 381–401; that stretch reads VIVALAVCGSILFLLIVLLLT. At 402–423 the chain is on the cytoplasmic side; that stretch reads VLFRMQAQPPGYRHVADGEDHA.

This sequence belongs to the histidine acid phosphatase family. In terms of processing, the membrane-bound form is converted to the soluble form by sequential proteolytic processing. First, the C-terminal cytoplasmic tail is removed. Cleavage by a lysosomal protease releases the soluble form in the lysosome lumen.

It localises to the lysosome membrane. The protein localises to the lysosome lumen. It carries out the reaction a phosphate monoester + H2O = an alcohol + phosphate. This is Lysosomal acid phosphatase (ACP2) from Pongo abelii (Sumatran orangutan).